Reading from the N-terminus, the 214-residue chain is Adenylate kinase (214 aa).

12-17 (GVGKGT) contributes to the ATP binding site. Residues 32-61 (STGNIFRSQIASNSELGIKLKEIVESGGYV) form an NMP region. Residues Thr33, Arg38, 59-61 (GYV), 88-91 (GYPR), and Gln95 each bind AMP. Residues 126 to 163 (GRRICPSCNAQYHIYFKKSKLDTKCEIDQSELIQRKDD) form an LID region. Arg127 is a binding site for ATP. Zn(2+)-binding residues include Cys130, Cys133, Cys150, and Asp153. 2 residues coordinate AMP: Arg160 and Arg171. An ATP-binding site is contributed by Lys199.

The protein belongs to the adenylate kinase family. In terms of assembly, monomer.

The protein resides in the cytoplasm. It catalyses the reaction AMP + ATP = 2 ADP. Its pathway is purine metabolism; AMP biosynthesis via salvage pathway; AMP from ADP: step 1/1. Catalyzes the reversible transfer of the terminal phosphate group between ATP and AMP. Plays an important role in cellular energy homeostasis and in adenine nucleotide metabolism. This is Adenylate kinase from Mycoplasmopsis pulmonis (strain UAB CTIP) (Mycoplasma pulmonis).